The primary structure comprises 332 residues: Adenosine receptor A2b (332 aa).

The Extracellular segment spans residues M1–A8. A helical transmembrane segment spans residues L9–G33. Residues T34–N43 lie on the Cytoplasmic side of the membrane. The chain crosses the membrane as a helical span at residues Y44–I67. Over S68–C78 the chain is Extracellular. Cysteines 78 and 171 form a disulfide. The chain crosses the membrane as a helical span at residues L79–V101. Residues D102–R121 lie on the Cytoplasmic side of the membrane. The helical transmembrane segment at A122–W144 threads the bilayer. Over N145 to P178 the chain is Extracellular. Residues N153 and N163 are each glycosylated (N-linked (GlcNAc...) asparagine). E174 provides a ligand contact to adenosine. The helical transmembrane segment at M179–I203 threads the bilayer. Topologically, residues K204–S235 are cytoplasmic. A helical transmembrane segment spans residues L236–F259. Position 254 (N254) interacts with adenosine. At Q260–K267 the chain is on the extracellular side. The helical transmembrane segment at P268–A291 threads the bilayer. Positions 279 and 280 each coordinate adenosine. At Y292 to L332 the chain is on the cytoplasmic side. A lipid anchor (S-palmitoyl cysteine) is attached at C311.

It belongs to the G-protein coupled receptor 1 family.

It localises to the cell membrane. Functionally, receptor for adenosine. The activity of this receptor is mediated by G proteins which activate adenylyl cyclase. The polypeptide is Adenosine receptor A2b (ADORA2B) (Homo sapiens (Human)).